The chain runs to 432 residues: D-amino acid dehydrogenase (432 aa).

An FAD-binding site is contributed by 3–17 (VVILGSGVVGVASAW).

The protein belongs to the DadA oxidoreductase family. It depends on FAD as a cofactor.

The catalysed reaction is a D-alpha-amino acid + A + H2O = a 2-oxocarboxylate + AH2 + NH4(+). It functions in the pathway amino-acid degradation; D-alanine degradation; NH(3) and pyruvate from D-alanine: step 1/1. Its function is as follows. Oxidative deamination of D-amino acids. In Escherichia coli O45:K1 (strain S88 / ExPEC), this protein is D-amino acid dehydrogenase.